The sequence spans 91 residues: Defensin-like protein 82 (91 aa).

Residues 1-27 (MAIKKFSSLLLPLLMVLALVVLPIISG) form the signal peptide. 4 disulfide bridges follow: Cys34–Cys72, Cys41–Cys62, Cys47–Cys70, and Cys51–Cys71.

The protein belongs to the DEFL family.

Its subcellular location is the secreted. This Arabidopsis thaliana (Mouse-ear cress) protein is Defensin-like protein 82.